Consider the following 103-residue polypeptide: Cysteine-rich and transmembrane domain-containing protein 1 (103 aa).

The span at 1–45 (MNQGNPPPYPGPGPTAPYPPYPSQPMGPGFYPPGPPGGPYPPPQG) shows a compositional bias: pro residues. The interval 1–66 (MNQGNPPPYP…WQGGPQEPPK (66 aa)) is disordered. A compositionally biased stretch (low complexity) spans 46 to 56 (GYPYQGYPQYG). The chain crosses the membrane as a helical span at residues 80 to 97 (LGTSTCLTACWTALCCCC).

It belongs to the CYSTM1 family.

It is found in the membrane. This chain is Cysteine-rich and transmembrane domain-containing protein 1 (CYSTM1), found in Bos taurus (Bovine).